The chain runs to 220 residues: MSVQQRRLPVYKKILEENKKKWMIKEFLEYRLSKYGYIDSEILKTPLGTRIVIYAERPSRIIGRKGAIVKEVSNILATKLGVENPQIDVIDVSKIEAPEMFPKVVAYRIANAMAKGVRFRRVMFAAIRQLTEAGAKGFEIVVSGKLSTERARFEKQTFGKLYKIGYDAKNRVRRAVVHVLLKPGIYGIEVRIAPASLQYSDEYKIKPPVRPEAAAQQQQQ.

Residues 24–93 (IKEFLEYRLS…NPQIDVIDVS (70 aa)) form the KH type-2 domain.

This sequence belongs to the universal ribosomal protein uS3 family. In terms of assembly, part of the 30S ribosomal subunit.

In terms of biological role, binds the lower part of the 30S subunit head. This chain is Small ribosomal subunit protein uS3, found in Pyrobaculum arsenaticum (strain DSM 13514 / JCM 11321 / PZ6).